A 274-amino-acid polypeptide reads, in one-letter code: Lipid phosphate phosphatase 1 (274 aa).

Residues 1-15 (MISVMADEKHKEYFK) are Lumenal-facing. A helical membrane pass occupies residues 16-33 (LYYFQYMIIGLCTILFLY). Topologically, residues 34–69 (SEISLVPRGQNIEFSLDDPSISKRYVPNELVGPLEC) are cytoplasmic. A helical membrane pass occupies residues 70-87 (LILSVGLSNMVVFWTCMF). The Lumenal portion of the chain corresponds to 88-117 (DKDLLKKNRVKRLRERPDGISNDFHFMHTS). Residues 118–139 (ILCLMLIISINAALTGALKLII) traverse the membrane as a helical segment. Positions 136–144 (KLIIGNLRP) are phosphatase sequence motif I. Residues 140–189 (GNLRPDFVDRCIPDLQKMSDSDSLVFGLDICKQTNKWILYEGLKSTPSGH) are Cytoplasmic-facing. The interval 186-189 (PSGH) is phosphatase sequence motif II. A helical membrane pass occupies residues 190 to 203 (SSFIVSTMGFTYLW). Over 204–214 (QRVFTTRNTRS) the chain is Lumenal. A helical transmembrane segment spans residues 215–231 (CIWCPLLALVVMVSRVI). Positions 228–239 (SRVIDHRHHWYD) are phosphatase sequence motif III. Over 232–237 (DHRHHW) the chain is Cytoplasmic. Residues 238–255 (YDVVSGAVLAFLVIYCCW) form a helical membrane-spanning segment. Topologically, residues 256-274 (KWTFTNLAKRDILPSPVSV) are lumenal.

It belongs to the PA-phosphatase related phosphoesterase family.

Its subcellular location is the golgi apparatus membrane. It catalyses the reaction a 1,2-diacyl-sn-glycerol 3-diphosphate + H2O = a 1,2-diacyl-sn-glycero-3-phosphate + phosphate + H(+). The enzyme catalyses a 1,2-diacyl-sn-glycero-3-phosphate + H2O = a 1,2-diacyl-sn-glycerol + phosphate. It carries out the reaction a 1-acyl-sn-glycero-3-phosphate + H2O = a 1-acyl-sn-glycerol + phosphate. PA phosphatase activity is magnesium ion-independent and potently inhibited by N-ethylmaleimide. Also inhibited by phenylglyoxal and propranolol. Functionally, catalyzes the dephosphorylation of diacylglycerol diphosphate (DGPP) to phosphatidate (PA) and the subsequent dephosphorylation of PA to diacylglycerol (DAG). Together with DPP1, regulates intracellular DGPP and PA levels which are phospholipid molecules believed to play a signaling role in stress response. Can also use lysophosphatidic acid (LPA) as a substrate. Substrate preference is PA &gt; DGPP &gt; LPA. This Saccharomyces cerevisiae (strain ATCC 204508 / S288c) (Baker's yeast) protein is Lipid phosphate phosphatase 1 (LPP1).